We begin with the raw amino-acid sequence, 660 residues long: Zeaxanthin epoxidase, chloroplastic (660 aa).

Residues Met1–Lys49 constitute a chloroplast transit peptide. Residues Lys79 to Glu107 and Thr357 to Asp370 contribute to the FAD site. Positions Leu545 to Gly609 constitute an FHA domain.

It depends on FAD as a cofactor.

Its subcellular location is the plastid. The protein localises to the chloroplast membrane. It is found in the chloroplast thylakoid membrane. It catalyses the reaction all-trans-zeaxanthin + 4 reduced [2Fe-2S]-[ferredoxin] + 2 O2 + 4 H(+) = all-trans-violaxanthin + 4 oxidized [2Fe-2S]-[ferredoxin] + 2 H2O. The catalysed reaction is all-trans-zeaxanthin + 2 reduced [2Fe-2S]-[ferredoxin] + O2 + 2 H(+) = all-trans-antheraxanthin + 2 oxidized [2Fe-2S]-[ferredoxin] + H2O. The enzyme catalyses all-trans-antheraxanthin + 2 reduced [2Fe-2S]-[ferredoxin] + O2 + 2 H(+) = all-trans-violaxanthin + 2 oxidized [2Fe-2S]-[ferredoxin] + H2O. It carries out the reaction beta-cryptoxanthin + 2 reduced [2Fe-2S]-[ferredoxin] + O2 + 2 H(+) = (5R,6S)-5,6-epoxi-beta-cryptoxanthin + 2 oxidized [2Fe-2S]-[ferredoxin] + H2O. It functions in the pathway plant hormone biosynthesis; abscisate biosynthesis. Its function is as follows. Converts zeaxanthin into antheraxanthin and subsequently violaxanthin. Also acts on beta-cryptoxanthin. Involved in the epoxidation of zeaxanthin. This chain is Zeaxanthin epoxidase, chloroplastic, found in Capsicum annuum (Capsicum pepper).